The following is a 550-amino-acid chain: MLRKQDPMKTAGWKKLSDHFQTMKDVHMRDLFAEDGDRFQRFSIRFGDILVDYSKNRLNQETLLLLLGLAEEVGLKDGVEAMFTGERINETEDRAVLHTALRNRSDAPVFVDGRDVMPEVNAVLKKMEEFSRRVISGRWKGYSGKPVRDIVNIGIGGSDLGPKMVAECLRPYAAKGLSVHFVSNVDGTHIVETLKLLDPETTLFMIASKTFTTQETMTNAHTARDWFLKHAGDPAHIARHFVALSTNTDRVKAFGIDPENMFVFWDWVGGRYSLWSAIGLSVACAIGFEGFLDLLQGAHEMDRHFREEPFERNIPVILALIGIWYNNFFGAESEAVLPYDQYMHRFPAYFQQGNMESNGKSADRGGGRVRHQTGPIIWGEPGTNGQHAFYQLIHQGTKLVPADFLAPALSHNDVGDHHAILLSNFFAQTEALMRGKNREEVIEELRREGRSEDAIQRLWPHKVFEGNKPTNSILFRKLTPRVLGSLIAMYEHKIFVQGVIWNIFSFDQWGVELGKQLAARILPELNDRTTVAAHDSSTNGLINAYKQMRG.

Catalysis depends on E356, which acts as the Proton donor. Active-site residues include H387 and K515.

It belongs to the GPI family.

The protein resides in the cytoplasm. The catalysed reaction is alpha-D-glucose 6-phosphate = beta-D-fructose 6-phosphate. The protein operates within carbohydrate biosynthesis; gluconeogenesis. It functions in the pathway carbohydrate degradation; glycolysis; D-glyceraldehyde 3-phosphate and glycerone phosphate from D-glucose: step 2/4. Its function is as follows. Catalyzes the reversible isomerization of glucose-6-phosphate to fructose-6-phosphate. This is Glucose-6-phosphate isomerase from Syntrophobacter fumaroxidans (strain DSM 10017 / MPOB).